Here is a 464-residue protein sequence, read N- to C-terminus: Adenylyltransferase and sulfurtransferase MOCS3 (464 aa).

ATP contacts are provided by residues glycine 101, aspartate 122, asparagine 129 to arginine 133, lysine 146, and aspartate 190 to asparagine 191. Zn(2+)-binding residues include cysteine 231 and cysteine 234. The active-site Glycyl thioester intermediate; for adenylyltransferase activity is the cysteine 248. Positions 306 and 309 each coordinate Zn(2+). The Rhodanese domain maps to lysine 358 to proline 462. The active-site Cysteine persulfide intermediate; for sulfurtransferase activity is cysteine 422.

It in the N-terminal section; belongs to the HesA/MoeB/ThiF family. UBA4 subfamily. Requires Zn(2+) as cofactor.

The protein localises to the cytoplasm. The catalysed reaction is [molybdopterin-synthase sulfur-carrier protein]-C-terminal Gly-Gly + ATP + H(+) = [molybdopterin-synthase sulfur-carrier protein]-C-terminal Gly-Gly-AMP + diphosphate. It catalyses the reaction [molybdopterin-synthase sulfur-carrier protein]-C-terminal Gly-Gly-AMP + S-sulfanyl-L-cysteinyl-[cysteine desulfurase] + AH2 = [molybdopterin-synthase sulfur-carrier protein]-C-terminal-Gly-aminoethanethioate + L-cysteinyl-[cysteine desulfurase] + A + AMP + 2 H(+). It functions in the pathway tRNA modification; 5-methoxycarbonylmethyl-2-thiouridine-tRNA biosynthesis. The protein operates within cofactor biosynthesis; molybdopterin biosynthesis. Its function is as follows. Plays a central role in 2-thiolation of mcm(5)S(2)U at tRNA wobble positions of cytosolic tRNA(Lys), tRNA(Glu) and tRNA(Gln). Also essential during biosynthesis of the molybdenum cofactor. Acts by mediating the C-terminal thiocarboxylation of sulfur carriers URM1 and MOCS2A. Its N-terminus first activates URM1 and MOCS2A as acyl-adenylates (-COAMP), then the persulfide sulfur on the catalytic cysteine is transferred to URM1 and MOCS2A to form thiocarboxylation (-COSH) of their C-terminus. The reaction probably involves hydrogen sulfide that is generated from the persulfide intermediate and that acts as a nucleophile towards URM1 and MOCS2A. Subsequently, a transient disulfide bond is formed. Does not use thiosulfate as sulfur donor; NFS1 probably acting as a sulfur donor for thiocarboxylation reactions. The protein is Adenylyltransferase and sulfurtransferase MOCS3 of Arabidopsis thaliana (Mouse-ear cress).